Consider the following 621-residue polypeptide: 1-deoxy-D-xylulose-5-phosphate synthase (621 aa).

Thiamine diphosphate contacts are provided by residues His80 and 121 to 123 (GHS). Residue Asp152 participates in Mg(2+) binding. Thiamine diphosphate contacts are provided by residues 153–154 (GA), Asn181, Tyr288, and Glu370. Asn181 lines the Mg(2+) pocket.

This sequence belongs to the transketolase family. DXPS subfamily. Homodimer. Mg(2+) is required as a cofactor. It depends on thiamine diphosphate as a cofactor.

It catalyses the reaction D-glyceraldehyde 3-phosphate + pyruvate + H(+) = 1-deoxy-D-xylulose 5-phosphate + CO2. Its pathway is metabolic intermediate biosynthesis; 1-deoxy-D-xylulose 5-phosphate biosynthesis; 1-deoxy-D-xylulose 5-phosphate from D-glyceraldehyde 3-phosphate and pyruvate: step 1/1. In terms of biological role, catalyzes the acyloin condensation reaction between C atoms 2 and 3 of pyruvate and glyceraldehyde 3-phosphate to yield 1-deoxy-D-xylulose-5-phosphate (DXP). The chain is 1-deoxy-D-xylulose-5-phosphate synthase from Erwinia tasmaniensis (strain DSM 17950 / CFBP 7177 / CIP 109463 / NCPPB 4357 / Et1/99).